A 498-amino-acid chain; its full sequence is Myocyte-specific enhancer factor 2A (498 aa).

One can recognise an MADS-box domain in the interval 3–57 (RKKIQITRIMDERNRQVTFTKRKFGLMKKAYELSVLCDCEIALIIFNSSNKLFQY). Residues 58-86 (ASTDMDKVLLKYTEYNEPHESRTNSDIVE) constitute a DNA-binding region (mef2-type). The residue at position 59 (S59) is a Phosphoserine; by CK2. S98 and S108 each carry phosphoserine. S108 bears the Phosphothreonine mark. A disordered region spans residues 172 to 220 (LADSSMLSPPPATLHRNVSPGAPQRPPSTGSASGMLSTTDLTVPNGAGN). The segment covering 198–220 (PSTGSASGMLSTTDLTVPNGAGN) has biased composition (polar residues). S233 carries the post-translational modification Phosphoserine. A disordered region spans residues 240–268 (TGANSLGKVMPTKSPPPPGGGSLGMNSRK). An N6-acetyllysine modification is found at K247. The residue at position 253 (S253) is a Phosphoserine. Residues 264 to 281 (MNSRKPDLRVVIPPSSKG) are required for interaction with MAPKs. The interval 287 to 294 (SEEEELEL) is beta domain. Phosphothreonine; by MAPK7 occurs at positions 310 and 317. T310 carries the phosphothreonine; by NLK modification. Residue S353 is modified to Phosphoserine; by MAPK7. Residues 388 to 400 (SNLSINTNQNINI) show a composition bias toward polar residues. Residues 388 to 498 (SNLSINTNQN…KRMRMDTWVT (111 aa)) form a disordered region. An N6-acetyllysine; alternate modification is found at K401. Residue K401 forms a Glycyl lysine isopeptide (Lys-Gly) (interchain with G-Cter in SUMO); alternate linkage. A Phosphoserine modification is found at S406. T413 carries the phosphothreonine modification. Over residues 426 to 436 (QQPPPQPPQPQ) the composition is skewed to pro residues. S444 is modified (phosphoserine). Residues 444-457 (SPVDSLSSSSSSYD) show a composition bias toward low complexity. Basic and acidic residues-rich tracts occupy residues 458-468 (GSDREDPRGDF) and 479-498 (NTED…TWVT).

This sequence belongs to the MEF2 family. As to quaternary structure, binds DNA as a homo- or heterodimer. Dimerizes with MEF2D. Interacts with HDAC7. Interacts with PIAS1; the interaction enhances sumoylation. Interacts with HDAC4, HDAC9 and SLC2A4RG. Interacts (via the N-terminal) with MAPK7; the interaction results in the phosphorylation and transcriptional activity of MEF2A. Post-translationally, constitutive phosphorylation on Ser-406 promotes Lys-401 sumoylation thus preventing acetylation at this site. Dephosphorylation on Ser-406 by PPP3CA upon neuron depolarization promotes a switch from sumoylation to acetylation on residue Lys-403 leading to inhibition of dendrite claw differentiation. Phosphorylation on Thr-312 and Thr-319 are the main sites involved in p38 MAPK signaling and activate transcription. Phosphorylated on these sites by MAPK14/p38alpha and MAPK11/p38beta, but not by MAPK13/p38delta nor by MAPK12/p38gamma. Phosphorylation on Ser-408 by CDK5 induced by neurotoxicity inhibits MEF2A transcriptional activation leading to apoptosis of cortical neurons. Phosphorylation on Thr-312, Thr-319 and Ser-355 can be induced by EGF. Isoform 3 is phosphorylated on Ser-98 and Thr-108. In terms of processing, sumoylation on Lys-401 is enhanced by PIAS1 and represses transcriptional activity. Phosphorylation on Ser-406 is required for sumoylation. Has no effect on nuclear location nor on DNA binding. Sumoylated with SUMO1 and, to a lesser extent with SUMO2 and SUMO3. PIASx facilitates sumoylation in postsynaptic dendrites in the cerebellar cortex and promotes their morphogenesis. Acetylation on Lys-401 activates transcriptional activity. Acetylated by p300 on several sites in diffentiating myocytes. Acetylation on Lys-4 increases DNA binding and transactivation. Hyperacetylation by p300 leads to enhanced cardiac myocyte growth and heart failure. Post-translationally, proteolytically cleaved in cerebellar granule neurons on several sites by caspase 3 and caspase 7 following neurotoxicity. Preferentially cleaves the CDK5-mediated hyperphosphorylated form which leads to neuron apoptosis and transcriptional inactivation. Widely expressed though mainly restricted to skeletal and cardiac muscle, brain, neurons and lymphocytes. Differentially expressed depending on if isoforms contain the beta domain or not, with the total expression of the beta domain-lacking isoforms vastly exceeding that of the beta domain-containing isoforms. Isoforms containing the beta domain are expressed primarily in skeletal and cardiac muscle and in brain. Also present in lung and testis. Splicing to include the beta domain is induced in differentiating myocytes. Isoforms lacking the beta domain are expressed less abundantly in skeletal muscle, brain and lymphocytes, and are uniquely found in ovary, liver, spleen and kidney. In embryos, the beta domain-containing and beta domain-lacking isoforms are equally expressed. Also expressed cerebellar granule neurons and other regions of the CNS. Highest levels in the olfactory bulb, cortex, hippocampus, thalamus and cerebellum.

It localises to the nucleus. In terms of biological role, transcriptional activator which binds specifically to the MEF2 element, 5'-YTA[AT](4)TAR-3', found in numerous muscle-specific genes. Also involved in the activation of numerous growth factor- and stress-induced genes. Mediates cellular functions not only in skeletal and cardiac muscle development, but also in neuronal differentiation and survival. Plays diverse roles in the control of cell growth, survival and apoptosis via p38 MAPK signaling in muscle-specific and/or growth factor-related transcription. In cerebellar granule neurons, phosphorylated and sumoylated MEF2A represses transcription of NUR77 promoting synaptic differentiation. Associates with chromatin to the ZNF16 promoter. This is Myocyte-specific enhancer factor 2A (Mef2a) from Mus musculus (Mouse).